The following is a 289-amino-acid chain: Early E1A protein (289 aa).

Residues 41–49 (PTLHELYDL) form an interaction with RB1 in competition with E2F1 region. Residues 76-140 (EGIDLLTFPP…PSDDEDEEGE (65 aa)) form an interaction with UBE2I region. The interval 82–107 (TFPPAPGSPEPPHLSRQPEQPEQRAL) is disordered. The span at 84–93 (PPAPGSPEPP) shows a compositional bias: pro residues. Ser89 carries the phosphoserine; by host modification. Positions 113–117 (PNLVP) match the PXLXP motif, interaction with host ZMYND11 motif. Positions 122–126 (LTCHE) match the LXCXE motif, interaction with host RB1 and TMEM173/STING motif. Residues 154 to 174 (CRSCHYHRRNTGDPDIMCSLC) fold into a zinc finger. The disordered stretch occupies residues 186–240 (PVSEPEPEPEPEPEPARPTRRPKMAPAILRRPTSPVSRECNSSTDSCDSGPSNTP). Phosphoserine; by host is present on residues Ser219 and Ser231. The segment covering 219–237 (SPVSRECNSSTDSCDSGPS) has biased composition (polar residues). Residues 258–289 (RVGGRRQAVECIEDLLNEPGQPLDLSCKRPRP) carry the Bipartite nuclear localization signal motif. The PXDLS motif, CTBP-binding signature appears at 279–283 (PLDLS).

The protein belongs to the adenoviridae E1A protein family. As to quaternary structure, interacts with host UBE2I; this interaction interferes with polySUMOylation. Interacts with host RB1; this interaction induces the aberrant dissociation of RB1-E2F1 complex thereby disrupting the activity of RB1 and activating E2F1-regulated genes. Interacts with host ATF7; the interaction enhances ATF7-mediated viral transactivation activity which requires the zinc binding domains of both proteins. Isoform early E1A 32 kDa protein and isoform early E1A 26 kDa protein interact (via N-terminus) with CUL1 and E3 ubiquitin ligase RBX1; these interactions inhibit RBX1-CUL1-dependent elongation reaction of ubiquitin chains and attenuate ubiquitination of SCF(FBXW7) target proteins. Interacts (via PXLXP motif) with host ZMYND11/BS69 (via MYND-type zinc finger); this interaction inhibits E1A mediated transactivation. Interacts with host EP300; this interaction stimulates the acetylation of RB1 by recruiting EP300 and RB1 into a multimeric-protein complex. Interacts with host CTBP1 and CTBP2; this interaction seems to potentiate viral replication. Interacts with host DCAF7 (ref.16). Interacts with host DYRK1A. Interacts with host KPNA4; this interaction allows E1A import into the host nucleus. Interacts with host EP400; this interaction stabilizes MYC. Interacts with host TBP protein; this interaction probably disrupts the TBP-TATA complex. Interacts (via LXCXE motif) with host TMEM173/STING; this interaction impairs the ability of TMEM173/STING to sense cytosolic DNA and promote the production of type I interferon (IFN-alpha and IFN-beta). Interacts (via C-terminus) with host ZBED1/hDREF (via C-terminus); the interaction is direct.

The protein resides in the host nucleus. In terms of biological role, plays a role in viral genome replication by driving entry of quiescent cells into the cell cycle. Stimulation of progression from G1 to S phase allows the virus to efficiently use the cellular DNA replicating machinery to achieve viral genome replication. E1A protein has both transforming and trans-activating activities. Induces the disassembly of the E2F1 transcription factor from RB1 by direct competition for the same binding site on RB1, with subsequent transcriptional activation of E2F1-regulated S-phase genes and of the E2 region of the adenoviral genome. Release of E2F1 leads to the ARF-mediated inhibition of MDM2 and causes TP53/p53 to accumulate because it is not targeted for degradation by MDM2-mediated ubiquitination anymore. This increase in TP53, in turn, would arrest the cell proliferation and direct its death but this effect is counteracted by the viral protein E1B-55K. Inactivation of the ability of RB1 to arrest the cell cycle is critical for cellular transformation, uncontrolled cellular growth and proliferation induced by viral infection. Interaction with RBX1 and CUL1 inhibits ubiquitination of the proteins targeted by SCF(FBXW7) ubiquitin ligase complex, and may be linked to unregulated host cell proliferation. The tumorigenesis-restraining activity of E1A may be related to the disruption of the host CtBP-CtIP complex through the CtBP binding motif. Interaction with host TMEM173/STING impairs the ability of TMEM173/STING to sense cytosolic DNA and promote the production of type I interferon (IFN-alpha and IFN-beta). Promotes the sumoylation of host ZBED1/hDREF with SUMO1. The protein is Early E1A protein of Homo sapiens (Human).